The primary structure comprises 238 residues: Thrombin-like enzyme gyroxin B2.1 (238 aa).

Positions 1–229 constitute a Peptidase S1 domain; the sequence is VIGGDECNIN…HLDWIQNIIA (229 aa). Cystine bridges form between Cys-7/Cys-141, Cys-28/Cys-44, Cys-78/Cys-236, Cys-120/Cys-190, Cys-152/Cys-169, and Cys-180/Cys-205. His-43 (charge relay system) is an active-site residue. Asn-81 carries N-linked (GlcNAc...) asparagine glycosylation. Asp-88 acts as the Charge relay system in catalysis. Catalysis depends on Ser-184, which acts as the Charge relay system.

Belongs to the peptidase S1 family. Snake venom subfamily. As to quaternary structure, monomer. As to expression, expressed by the venom gland.

It localises to the secreted. Functionally, thrombin-like snake venom serine protease. Displays a specificity similar to trypsin. Releases only fibrinopeptide A in the conversion of fibrinogen (FGA) to fibrin. Shows coagulant, esterase and amidase activities. Reversibly increases the permeability of the blood brain barrier (BBB) in mice. Induces the barrel rotation syndrome in mice, which is manifested by gyroxin-like, rapid rolling motions. This syndrome may be due to its effect on BBB permeability, and certainly also to other actions affecting endogenous substrates present in the endothelium, nervous tissues or blood. This Crotalus durissus terrificus (South American rattlesnake) protein is Thrombin-like enzyme gyroxin B2.1.